The following is a 301-amino-acid chain: MTTTSIDPPVYATVDVIREPKAYDGMPKKDECRLPSYSERAITKPVEARKLIRNRLMTKSTTGWCEGYIQANLLVLPAKYRDDFVNLCVRNPVPCPLLGETEIGKPTEFKPEALAKQSNVATDIPFYCEYINGKFSRELENISKEWTEDYVGFLIGCSFSFEAALVAENFIPRHLPTGDAPPMFITNIPLCASGVFTGTFVVSMRPYPEKDLERIRKITSAYTNCHGEPVAWGWDGAKKIGVKDCGKPDFGVPVEFKEGEIPIFWGCGVTPQNVVMMSKLPEPVYSHKPGYMYLTDLTHNC.

It belongs to the D-glutamate cyclase family.

The protein is Putative hydro-lyase C5H10.01 of Schizosaccharomyces pombe (strain 972 / ATCC 24843) (Fission yeast).